The chain runs to 310 residues: L-lactate dehydrogenase (310 aa).

Residues 10 to 11, D32, Y62, and 76 to 77 each bind NAD(+); these read MV and GV. Substrate is bound by residues Q79, R85, and 117-120; that span reads NPVD. NAD(+)-binding positions include 115–117 and S140; that span reads ATN. 145–148 lines the substrate pocket; the sequence is DTAR. Residues R150 and 162 to 167 contribute to the beta-D-fructose 1,6-bisphosphate site; that span reads QSVHAY. Catalysis depends on H172, which acts as the Proton acceptor. The residue at position 218 (Y218) is a Phosphotyrosine. Residue T227 participates in substrate binding.

It belongs to the LDH/MDH superfamily. LDH family. Homotetramer.

The protein localises to the cytoplasm. The catalysed reaction is (S)-lactate + NAD(+) = pyruvate + NADH + H(+). Its pathway is fermentation; pyruvate fermentation to lactate; (S)-lactate from pyruvate: step 1/1. Allosterically activated by fructose 1,6-bisphosphate (FBP). It binds two fructose 1,6-bisphosphate (FBP) molecules per tetramer. In terms of biological role, catalyzes the conversion of lactate to pyruvate. This chain is L-lactate dehydrogenase, found in Thermus caldophilus.